The following is a 162-amino-acid chain: MQHLVLIGFMGSGKSSLAQELGLALKLEVLDTDMIISERVGLSVREIFEELGEDNFRMFEKNLIDELKTLKTPHVISTGGGIVMHDNLKGLGTTFYLKIDFETLIKRLNQKEREKRPLLNNLTQAKELFEKRQALYEKNASFIIDARGGLNNSLKQVLQFIA.

Residue 11–16 coordinates ATP; it reads GSGKSS. Position 15 (Ser-15) interacts with Mg(2+). Substrate is bound by residues Asp-33, Arg-57, and Gly-80. Arg-116 serves as a coordination point for ATP. Arg-132 lines the substrate pocket.

This sequence belongs to the shikimate kinase family. As to quaternary structure, monomer. It depends on Mg(2+) as a cofactor.

It localises to the cytoplasm. The enzyme catalyses shikimate + ATP = 3-phosphoshikimate + ADP + H(+). The protein operates within metabolic intermediate biosynthesis; chorismate biosynthesis; chorismate from D-erythrose 4-phosphate and phosphoenolpyruvate: step 5/7. Its function is as follows. Catalyzes the specific phosphorylation of the 3-hydroxyl group of shikimic acid using ATP as a cosubstrate. This is Shikimate kinase from Helicobacter pylori (strain G27).